We begin with the raw amino-acid sequence, 129 residues long: Integration host factor subunit alpha (129 aa).

The interval 87–129 (SALNGEAPPEDHAEIDAREEAAADAAEARGEDFDEEGMEDMEG) is disordered. A compositionally biased stretch (basic and acidic residues) spans 95–117 (PEDHAEIDAREEAAADAAEARGE). Acidic residues predominate over residues 118–129 (DFDEEGMEDMEG).

Belongs to the bacterial histone-like protein family. As to quaternary structure, heterodimer of an alpha and a beta chain.

Functionally, this protein is one of the two subunits of integration host factor, a specific DNA-binding protein that functions in genetic recombination as well as in transcriptional and translational control. It is necessary for normal cell growth and the production of carotenoids in response to light. This chain is Integration host factor subunit alpha (ihfA), found in Myxococcus xanthus.